Reading from the N-terminus, the 372-residue chain is N-methyl-L-tryptophan oxidase (372 aa).

Residue 4 to 34 (DLIIIGSGSVGAAAGYYATRAGLNVLMTDAH) coordinates FAD. S-8alpha-FAD cysteine is present on Cys-308.

This sequence belongs to the MSOX/MTOX family. MTOX subfamily. Monomer. FAD serves as cofactor.

It catalyses the reaction N(alpha)-methyl-L-tryptophan + O2 + H2O = L-tryptophan + formaldehyde + H2O2. Its function is as follows. Catalyzes the oxidative demethylation of N-methyl-L-tryptophan. This is N-methyl-L-tryptophan oxidase from Escherichia coli O9:H4 (strain HS).